The primary structure comprises 933 residues: Phosphoenolpyruvate carboxylase (933 aa).

Residues histidine 164 and lysine 595 contribute to the active site.

The protein belongs to the PEPCase type 1 family. Requires Mg(2+) as cofactor.

The enzyme catalyses oxaloacetate + phosphate = phosphoenolpyruvate + hydrogencarbonate. In terms of biological role, forms oxaloacetate, a four-carbon dicarboxylic acid source for the tricarboxylic acid cycle. This chain is Phosphoenolpyruvate carboxylase, found in Rhodopseudomonas palustris (strain HaA2).